Reading from the N-terminus, the 675-residue chain is Protein REPRESSOR OF VERNALIZATION 1 (675 aa).

The interval 1-143 (MGRRRRFTQQ…DPVKVTGKGK (143 aa)) is disordered. Low complexity predominate over residues 22-31 (AEPPKTAKPA). The segment covering 48 to 70 (EEEDEDEEDELELEDEEDDEKDL) has biased composition (acidic residues). Basic and acidic residues predominate over residues 71 to 86 (EEMRRNEEEERREETR). A Nuclear localization signal motif is present at residues 73–80 (MRRNEEEE). Basic residues predominate over residues 87–96 (TRRRRGRKPK). The segment covering 113 to 127 (SDEEEEEEVREEDST) has biased composition (acidic residues). The BAH domain maps to 157–275 (NTFELEDPVL…TVAKKLWNLT (119 aa)). Disordered stretches follow at residues 300–349 (ELPD…KPET), 493–512 (GLTP…LQMT), and 587–675 (LASP…ADHE). 3 stretches are compositionally biased toward basic and acidic residues: residues 333–346 (VSRD…HFVK), 499–512 (KTSE…LQMT), and 613–627 (KLEK…KPEE). A TFIIS central domain is found at 372–518 (YRDKWLDKLL…LQMTDARCER (147 aa)).

As to expression, expressed constitutively.

It localises to the nucleus. Component of a grass-specific mechanism of vernalization, a process by which prolonged cold exposure provides competence to flower in daylengths longer than 12 hours. Negative regulator of flowering required for vernalization establishment by repressing VRN1 before vernalization and in the fall season. The protein is Protein REPRESSOR OF VERNALIZATION 1 of Brachypodium distachyon (Purple false brome).